The sequence spans 264 residues: Thymidylate synthase (264 aa).

Residue Arg-21 coordinates dUMP. His-51 lines the (6R)-5,10-methylene-5,6,7,8-tetrahydrofolate pocket. 126–127 (RR) lines the dUMP pocket. Cys-146 (nucleophile) is an active-site residue. Residues 166–169 (RSAD), Asn-177, and 207–209 (HLY) contribute to the dUMP site. Asp-169 is a (6R)-5,10-methylene-5,6,7,8-tetrahydrofolate binding site. Ala-263 is a binding site for (6R)-5,10-methylene-5,6,7,8-tetrahydrofolate.

This sequence belongs to the thymidylate synthase family. Bacterial-type ThyA subfamily. In terms of assembly, homodimer.

The protein localises to the cytoplasm. It catalyses the reaction dUMP + (6R)-5,10-methylene-5,6,7,8-tetrahydrofolate = 7,8-dihydrofolate + dTMP. It functions in the pathway pyrimidine metabolism; dTTP biosynthesis. In terms of biological role, catalyzes the reductive methylation of 2'-deoxyuridine-5'-monophosphate (dUMP) to 2'-deoxythymidine-5'-monophosphate (dTMP) while utilizing 5,10-methylenetetrahydrofolate (mTHF) as the methyl donor and reductant in the reaction, yielding dihydrofolate (DHF) as a by-product. This enzymatic reaction provides an intracellular de novo source of dTMP, an essential precursor for DNA biosynthesis. The polypeptide is Thymidylate synthase (Bartonella bacilliformis (strain ATCC 35685 / KC583 / Herrer 020/F12,63)).